The primary structure comprises 198 residues: Probable GTP-binding protein EngB (198 aa).

Residues 21–195 enclose the EngB-type G domain; that stretch reads NIPEVCFVGR…YDALIRLLEV (175 aa). GTP contacts are provided by residues 29 to 36, 56 to 60, 75 to 78, 142 to 145, and 174 to 176; these read GRSNVGKS, GKTRL, DAPG, TKLD, and VSN. The Mg(2+) site is built by Ser36 and Thr58.

It belongs to the TRAFAC class TrmE-Era-EngA-EngB-Septin-like GTPase superfamily. EngB GTPase family. The cofactor is Mg(2+).

Necessary for normal cell division and for the maintenance of normal septation. The chain is Probable GTP-binding protein EngB from Mesoplasma florum (strain ATCC 33453 / NBRC 100688 / NCTC 11704 / L1) (Acholeplasma florum).